The sequence spans 283 residues: Orotidine 5'-phosphate decarboxylase (283 aa).

Substrate is bound by residues Asp-40, 62–64 (KTH), 93–102 (DRKFADIGNT), Tyr-220, and Arg-239. Catalysis depends on Lys-95, which acts as the Proton donor.

The protein belongs to the OMP decarboxylase family.

It carries out the reaction orotidine 5'-phosphate + H(+) = UMP + CO2. Its pathway is pyrimidine metabolism; UMP biosynthesis via de novo pathway; UMP from orotate: step 2/2. The polypeptide is Orotidine 5'-phosphate decarboxylase (PYR6) (Mycosarcoma maydis (Corn smut fungus)).